Reading from the N-terminus, the 293-residue chain is Ribosomal protein L11 methyltransferase (293 aa).

S-adenosyl-L-methionine is bound by residues threonine 145, glycine 166, aspartate 188, and asparagine 230.

It belongs to the methyltransferase superfamily. PrmA family.

It is found in the cytoplasm. The catalysed reaction is L-lysyl-[protein] + 3 S-adenosyl-L-methionine = N(6),N(6),N(6)-trimethyl-L-lysyl-[protein] + 3 S-adenosyl-L-homocysteine + 3 H(+). Methylates ribosomal protein L11. This is Ribosomal protein L11 methyltransferase from Shewanella pealeana (strain ATCC 700345 / ANG-SQ1).